The sequence spans 342 residues: Probable dual-specificity RNA methyltransferase RlmN (342 aa).

E91 functions as the Proton acceptor in the catalytic mechanism. A Radical SAM core domain is found at 97–326 (YKFGNTACVS…CTVRRELGSD (230 aa)). C104 and C331 are joined by a disulfide. Positions 111, 115, and 118 each coordinate [4Fe-4S] cluster. S-adenosyl-L-methionine contacts are provided by residues 157 to 158 (GE), S189, 212 to 214 (SLH), and N288. C331 (S-methylcysteine intermediate) is an active-site residue.

This sequence belongs to the radical SAM superfamily. RlmN family. [4Fe-4S] cluster serves as cofactor.

It is found in the cytoplasm. It carries out the reaction adenosine(2503) in 23S rRNA + 2 reduced [2Fe-2S]-[ferredoxin] + 2 S-adenosyl-L-methionine = 2-methyladenosine(2503) in 23S rRNA + 5'-deoxyadenosine + L-methionine + 2 oxidized [2Fe-2S]-[ferredoxin] + S-adenosyl-L-homocysteine. The catalysed reaction is adenosine(37) in tRNA + 2 reduced [2Fe-2S]-[ferredoxin] + 2 S-adenosyl-L-methionine = 2-methyladenosine(37) in tRNA + 5'-deoxyadenosine + L-methionine + 2 oxidized [2Fe-2S]-[ferredoxin] + S-adenosyl-L-homocysteine. Functionally, specifically methylates position 2 of adenine 2503 in 23S rRNA and position 2 of adenine 37 in tRNAs. This chain is Probable dual-specificity RNA methyltransferase RlmN, found in Caldanaerobacter subterraneus subsp. tengcongensis (strain DSM 15242 / JCM 11007 / NBRC 100824 / MB4) (Thermoanaerobacter tengcongensis).